A 306-amino-acid chain; its full sequence is Pantothenate kinase (306 aa).

90–97 is a binding site for ATP; it reads GSVAVGKS.

It belongs to the prokaryotic pantothenate kinase family.

It localises to the cytoplasm. It carries out the reaction (R)-pantothenate + ATP = (R)-4'-phosphopantothenate + ADP + H(+). It participates in cofactor biosynthesis; coenzyme A biosynthesis; CoA from (R)-pantothenate: step 1/5. This chain is Pantothenate kinase, found in Lactococcus lactis subsp. cremoris (strain MG1363).